The sequence spans 115 residues: Large ribosomal subunit protein bL20 (115 aa).

This sequence belongs to the bacterial ribosomal protein bL20 family.

Functionally, binds directly to 23S ribosomal RNA and is necessary for the in vitro assembly process of the 50S ribosomal subunit. It is not involved in the protein synthesizing functions of that subunit. The chain is Large ribosomal subunit protein bL20 from Synechococcus sp. (strain CC9605).